We begin with the raw amino-acid sequence, 260 residues long: Indole-3-glycerol phosphate synthase (260 aa).

Belongs to the TrpC family.

It carries out the reaction 1-(2-carboxyphenylamino)-1-deoxy-D-ribulose 5-phosphate + H(+) = (1S,2R)-1-C-(indol-3-yl)glycerol 3-phosphate + CO2 + H2O. It functions in the pathway amino-acid biosynthesis; L-tryptophan biosynthesis; L-tryptophan from chorismate: step 4/5. In Lacticaseibacillus paracasei (strain ATCC 334 / BCRC 17002 / CCUG 31169 / CIP 107868 / KCTC 3260 / NRRL B-441) (Lactobacillus paracasei), this protein is Indole-3-glycerol phosphate synthase.